Here is a 271-residue protein sequence, read N- to C-terminus: Rhomboid-type serine protease 2 (271 aa).

Transmembrane regions (helical) follow at residues 16-36 (GLAVGLSIFLTALFLVNNLVY), 64-84 (HLSFFHLFFNVISTFSMIVMF), 89-111 (GTLYTGVILNLLAVFTAIPYCLI), 115-137 (LFPNVEIGGASGWFFSFLGYFAV), 152-172 (FSFPTLYFPVALLFVTALLAP), and 176-196 (LPGHAIGLLLGYFMGLKENWV). The active-site Nucleophile is Ser-125. His-179 is a catalytic residue. The tract at residues 252 to 271 (HNTDTPAEPTFQGNGRVLGN) is disordered.

It belongs to the peptidase S54 family.

It localises to the golgi apparatus membrane. It is found in the golgi apparatus. The protein localises to the cis-Golgi network membrane. The enzyme catalyses Cleaves type-1 transmembrane domains using a catalytic dyad composed of serine and histidine that are contributed by different transmembrane domains.. Its function is as follows. Probable rhomboid-type serine protease that catalyzes intramembrane proteolysis. This chain is Rhomboid-type serine protease 2 (RBD2), found in Kluyveromyces lactis (strain ATCC 8585 / CBS 2359 / DSM 70799 / NBRC 1267 / NRRL Y-1140 / WM37) (Yeast).